We begin with the raw amino-acid sequence, 324 residues long: tRNA U34 carboxymethyltransferase (324 aa).

Carboxy-S-adenosyl-L-methionine-binding positions include lysine 92, tryptophan 106, lysine 111, glycine 131, 153–155, methionine 197, tyrosine 201, and arginine 316; that span reads DPS.

The protein belongs to the class I-like SAM-binding methyltransferase superfamily. CmoB family. Homotetramer.

It catalyses the reaction carboxy-S-adenosyl-L-methionine + 5-hydroxyuridine(34) in tRNA = 5-carboxymethoxyuridine(34) in tRNA + S-adenosyl-L-homocysteine + H(+). Functionally, catalyzes carboxymethyl transfer from carboxy-S-adenosyl-L-methionine (Cx-SAM) to 5-hydroxyuridine (ho5U) to form 5-carboxymethoxyuridine (cmo5U) at position 34 in tRNAs. The polypeptide is tRNA U34 carboxymethyltransferase (Hahella chejuensis (strain KCTC 2396)).